Reading from the N-terminus, the 279-residue chain is Peptide deformylase 1B, chloroplastic (279 aa).

Cys177 and His219 together coordinate Fe cation. The active site involves Glu220. His223 is a Fe cation binding site.

The protein belongs to the polypeptide deformylase family. Fe(2+) is required as a cofactor.

It localises to the plastid. Its subcellular location is the chloroplast. It carries out the reaction N-terminal N-formyl-L-methionyl-[peptide] + H2O = N-terminal L-methionyl-[peptide] + formate. Its function is as follows. Removes the formyl group from the N-terminal Met of newly synthesized proteins. The chain is Peptide deformylase 1B, chloroplastic (PDF1B) from Solanum lycopersicum (Tomato).